Here is a 252-residue protein sequence, read N- to C-terminus: 14-3-3-like protein GF14 omicron (252 aa).

A phosphoserine mark is found at S65 and S188.

Belongs to the 14-3-3 family.

The protein localises to the nucleus. Its subcellular location is the cytoplasm. Functionally, is associated with a DNA binding complex that binds to the G box, a well-characterized cis-acting DNA regulatory element found in plant genes. This chain is 14-3-3-like protein GF14 omicron (GRF11), found in Arabidopsis thaliana (Mouse-ear cress).